The primary structure comprises 860 residues: Leucine--tRNA ligase (860 aa).

The short motif at 42–52 (PYPSGRLHMGH) is the 'HIGH' region element. The short motif at 619 to 623 (KMSKS) is the 'KMSKS' region element. Residue Lys-622 coordinates ATP.

It belongs to the class-I aminoacyl-tRNA synthetase family.

It localises to the cytoplasm. The catalysed reaction is tRNA(Leu) + L-leucine + ATP = L-leucyl-tRNA(Leu) + AMP + diphosphate. In Shigella dysenteriae serotype 1 (strain Sd197), this protein is Leucine--tRNA ligase.